Here is a 331-residue protein sequence, read N- to C-terminus: Holliday junction branch migration complex subunit RuvB (331 aa).

Residues 1–182 (MSSDTLHKYE…FGIPLHLEFY (182 aa)) form a large ATPase domain (RuvB-L) region. ATP contacts are provided by residues Leu-21, Arg-22, Gly-63, Lys-66, Thr-67, Thr-68, 129–131 (EDY), Arg-172, Tyr-182, and Arg-219. Thr-67 contacts Mg(2+). The segment at 183–254 (SVDELVLVIK…FANSALFRLG (72 aa)) is small ATPAse domain (RuvB-S). Residues 257–331 (GAGFDKMDLK…FEYLLSSKYI (75 aa)) are head domain (RuvB-H). DNA is bound by residues Arg-310 and Arg-315.

Belongs to the RuvB family. As to quaternary structure, homohexamer. Forms an RuvA(8)-RuvB(12)-Holliday junction (HJ) complex. HJ DNA is sandwiched between 2 RuvA tetramers; dsDNA enters through RuvA and exits via RuvB. An RuvB hexamer assembles on each DNA strand where it exits the tetramer. Each RuvB hexamer is contacted by two RuvA subunits (via domain III) on 2 adjacent RuvB subunits; this complex drives branch migration. In the full resolvosome a probable DNA-RuvA(4)-RuvB(12)-RuvC(2) complex forms which resolves the HJ.

Its subcellular location is the cytoplasm. The enzyme catalyses ATP + H2O = ADP + phosphate + H(+). Its function is as follows. The RuvA-RuvB-RuvC complex processes Holliday junction (HJ) DNA during genetic recombination and DNA repair, while the RuvA-RuvB complex plays an important role in the rescue of blocked DNA replication forks via replication fork reversal (RFR). RuvA specifically binds to HJ cruciform DNA, conferring on it an open structure. The RuvB hexamer acts as an ATP-dependent pump, pulling dsDNA into and through the RuvAB complex. RuvB forms 2 homohexamers on either side of HJ DNA bound by 1 or 2 RuvA tetramers; 4 subunits per hexamer contact DNA at a time. Coordinated motions by a converter formed by DNA-disengaged RuvB subunits stimulates ATP hydrolysis and nucleotide exchange. Immobilization of the converter enables RuvB to convert the ATP-contained energy into a lever motion, pulling 2 nucleotides of DNA out of the RuvA tetramer per ATP hydrolyzed, thus driving DNA branch migration. The RuvB motors rotate together with the DNA substrate, which together with the progressing nucleotide cycle form the mechanistic basis for DNA recombination by continuous HJ branch migration. Branch migration allows RuvC to scan DNA until it finds its consensus sequence, where it cleaves and resolves cruciform DNA. The protein is Holliday junction branch migration complex subunit RuvB of Anaplasma marginale (strain St. Maries).